Here is a 675-residue protein sequence, read N- to C-terminus: Methionine--tRNA ligase (675 aa).

The 'HIGH' region motif lies at 15–25; the sequence is PYANGSIHLGH. Zn(2+) contacts are provided by Cys146, Cys149, Cys159, and Cys162. The 'KMSKS' region motif lies at 332–336; it reads KMSKS. Residue Lys335 coordinates ATP. The 103-residue stretch at 573–675 folds into the tRNA-binding domain; it reads DFAKVDMRIA…SGAQPGMQVK (103 aa).

Belongs to the class-I aminoacyl-tRNA synthetase family. MetG type 1 subfamily. Homodimer. It depends on Zn(2+) as a cofactor.

It is found in the cytoplasm. It catalyses the reaction tRNA(Met) + L-methionine + ATP = L-methionyl-tRNA(Met) + AMP + diphosphate. Is required not only for elongation of protein synthesis but also for the initiation of all mRNA translation through initiator tRNA(fMet) aminoacylation. The sequence is that of Methionine--tRNA ligase from Yersinia pseudotuberculosis serotype O:3 (strain YPIII).